We begin with the raw amino-acid sequence, 149 residues long: Calmodulin (149 aa).

Position 2 is an N-acetylalanine (alanine 2). EF-hand domains lie at 8 to 43 (EQIS…LGQN), 44 to 79 (PTEA…KMRD), 81 to 116 (DSEE…LGEK), and 117 to 149 (LTDN…MLSK). Residues aspartate 21, aspartate 23, aspartate 25, threonine 27, glutamate 32, aspartate 57, aspartate 59, asparagine 61, threonine 63, glutamate 68, aspartate 94, aspartate 96, asparagine 98, tyrosine 100, glutamate 105, aspartate 130, aspartate 132, aspartate 134, glutamine 136, and glutamate 141 each contribute to the Ca(2+) site.

This sequence belongs to the calmodulin family.

Its function is as follows. Calmodulin mediates the control of a large number of enzymes, ion channels and other proteins by Ca(2+). Among the enzymes to be stimulated by the calmodulin-Ca(2+) complex are a number of protein kinases and phosphatases. This chain is Calmodulin (CMD1), found in Pleurotus ostreatus (Oyster mushroom).